We begin with the raw amino-acid sequence, 263 residues long: Type III pantothenate kinase (263 aa).

6–13 (DVGNTNIK) contacts ATP. 108 to 111 (GSDR) contacts substrate. The active-site Proton acceptor is Asp110. Residue Asp131 participates in K(+) binding. An ATP-binding site is contributed by Thr134. Thr187 contributes to the substrate binding site.

This sequence belongs to the type III pantothenate kinase family. As to quaternary structure, homodimer. The cofactor is NH4(+). K(+) is required as a cofactor.

The protein localises to the cytoplasm. The catalysed reaction is (R)-pantothenate + ATP = (R)-4'-phosphopantothenate + ADP + H(+). The protein operates within cofactor biosynthesis; coenzyme A biosynthesis; CoA from (R)-pantothenate: step 1/5. Its function is as follows. Catalyzes the phosphorylation of pantothenate (Pan), the first step in CoA biosynthesis. The protein is Type III pantothenate kinase of Anaplasma phagocytophilum (strain HZ).